The primary structure comprises 357 residues: Protein ORF58 (357 aa).

A run of 11 helical transmembrane segments spans residues 20–40 (LAAT…FTLF), 44–64 (ITAV…CMCL), 78–98 (WICA…GFTF), 101–121 (VPFI…YPLA), 132–152 (IVHR…YLLL), 157–177 (FVSG…LLAF), 219–239 (VVVF…IGLL), 242–262 (VLIG…SCVG), 270–290 (ALFV…ILGS), 300–320 (CLCC…IQLI), and 333–353 (MVLA…SVIN).

Belongs to the herpesviridae BMRF2 family.

It localises to the virion membrane. It is found in the host cell membrane. Functionally, participates in rearrangement of cellular actin to increase intercellular contacts and thereby promotes virus cell-to-cell spreadin$g. This is Protein ORF58 (ORF58) from Homo sapiens (Human).